The chain runs to 157 residues: UPF0587 protein C2D10.03c (157 aa).

The Zn(2+) site is built by Cys34, Cys37, Cys68, and Cys71.

Belongs to the UPF0587 family.

The protein is UPF0587 protein C2D10.03c of Schizosaccharomyces pombe (strain 972 / ATCC 24843) (Fission yeast).